The following is a 561-amino-acid chain: uncharacterized protein (561 aa).

2 consecutive transmembrane segments (helical) span residues Phe29–Ile49 and Phe80–Ile100.

Its subcellular location is the cell membrane. This is an uncharacterized protein from Mycoplasma pneumoniae (strain ATCC 29342 / M129 / Subtype 1) (Mycoplasmoides pneumoniae).